The primary structure comprises 216 residues: Probable GTP-binding protein EngB (216 aa).

Residues 27–201 (EGIEVAFAGR…SQKLNTWFNE (175 aa)) form the EngB-type G domain. Residues 35–42 (GRSNAGKS), 62–66 (GRTQL), 80–83 (DLPG), 147–150 (TKAD), and 180–182 (FSS) contribute to the GTP site. 2 residues coordinate Mg(2+): S42 and T64.

The protein belongs to the TRAFAC class TrmE-Era-EngA-EngB-Septin-like GTPase superfamily. EngB GTPase family. Requires Mg(2+) as cofactor.

Its function is as follows. Necessary for normal cell division and for the maintenance of normal septation. The protein is Probable GTP-binding protein EngB of Serratia proteamaculans (strain 568).